Here is an 88-residue protein sequence, read N- to C-terminus: Small ribosomal subunit protein uS19 (88 aa).

Belongs to the universal ribosomal protein uS19 family.

Its function is as follows. Protein S19 forms a complex with S13 that binds strongly to the 16S ribosomal RNA. This chain is Small ribosomal subunit protein uS19, found in Ureaplasma parvum serovar 3 (strain ATCC 27815 / 27 / NCTC 11736).